A 732-amino-acid polypeptide reads, in one-letter code: Cyclopenase asqI (732 aa).

Zn(2+) contacts are provided by His168, His172, and His200.

Belongs to the tyrosinase family. The cofactor is Zn(2+).

The enzyme catalyses (-)-cyclopenine = viridicatin + methyl isocyanate + H(+). It carries out the reaction (-)-4'-methoxycyclopenine = 4'-methoxyviridicatin + methyl isocyanate + H(+). Its pathway is secondary metabolite biosynthesis. It participates in alkaloid biosynthesis. It functions in the pathway mycotoxin biosynthesis. Functionally, cyclopenase; part of the gene cluster that mediates the biosynthesis of the aspoquinolone mycotoxins. Within the pathway, the cyclopenase asqI catalyzes the conversion of 4'-methoxycyclopenin into 4'-methoxyviridicatin. Cyclopenin can also be converted into viridicatin by asqI. The first step of the pathway is catalyzed by the nonribosomal peptide synthetase asqK that condenses anthranilic acid and O-methyl-L-tyrosine to produce 4'-methoxycyclopeptin. 4'-methoxycyclopeptin is then converted to 4'-methoxydehydrocyclopeptin by the ketoglutarate-dependent dioxygenase asqJ. AsqJ also converts its first product 4'-methoxydehydrocyclopeptin to 4'-methoxycyclopenin. The following conversion of 4'-methoxycyclopenin into 4'-methoxyviridicatin is catalyzed by the cyclopenase asqI. 4'-methoxyviridicatin is the precursor of quinolone natural products, and is further converted to quinolinone B. The prenyltransferase asqH1 then catalyzes the canonical Friedel-Crafts alkylation of quinolinone B with dimethylallyl cation to yield dimethylallyl quinolone, which is subjected to FAD-dependent dehydrogenation by the FAD-linked oxidoreductase asqF to yield conjugated aryl diene. The delta(3') double bond then serves as the site of the second alkylation with DMAPP catalyzed by the prenyltransferase asqH2 to yield a carbenium ion intermediate, which can be attacked by H(2)O to yield a styrenyl quinolone containing a C3'-hydroxyprenyl chain. The FAD-dependent monooxygenase asqG performs epoxidation of the terminal C7'-C8' olefin. Finally, after dehydratation of the epoxide at C3 by asqC, the quinolone epoxide rearrangement protein asqO catalyzes an enzymatic 3-exo-tet cyclization to yield the cyclopropyl-THF ring system in aspoquinolone. The polypeptide is Cyclopenase asqI (Emericella nidulans (strain FGSC A4 / ATCC 38163 / CBS 112.46 / NRRL 194 / M139) (Aspergillus nidulans)).